The following is a 335-amino-acid chain: F420-dependent glucose-6-phosphate dehydrogenase 1 (335 aa).

D38 serves as a coordination point for coenzyme F420-(gamma-Glu)n. H39 functions as the Proton donor in the catalytic mechanism. Coenzyme F420-(gamma-Glu)n is bound by residues T75 and 106–107 (TG). Catalysis depends on E108, which acts as the Proton acceptor. Coenzyme F420-(gamma-Glu)n-binding positions include N111, 176–177 (GG), and 179–180 (VV). Substrate-binding residues include T194, K197, K258, and R282.

It belongs to the F420-dependent glucose-6-phosphate dehydrogenase family. As to quaternary structure, homodimer.

It catalyses the reaction oxidized coenzyme F420-(gamma-L-Glu)(n) + D-glucose 6-phosphate + H(+) = 6-phospho-D-glucono-1,5-lactone + reduced coenzyme F420-(gamma-L-Glu)(n). In terms of biological role, catalyzes the coenzyme F420-dependent oxidation of glucose 6-phosphate (G6P) to 6-phosphogluconolactone. In Rhodococcus jostii (strain RHA1), this protein is F420-dependent glucose-6-phosphate dehydrogenase 1.